Reading from the N-terminus, the 439-residue chain is Xaa-Pro dipeptidase (439 aa).

5 residues coordinate Mn(2+): Asp244, Asp255, His335, Glu380, and Glu419.

Belongs to the peptidase M24B family. Bacterial-type prolidase subfamily. Mn(2+) is required as a cofactor.

The enzyme catalyses Xaa-L-Pro dipeptide + H2O = an L-alpha-amino acid + L-proline. In terms of biological role, splits dipeptides with a prolyl residue in the C-terminal position. The chain is Xaa-Pro dipeptidase from Shewanella sp. (strain ANA-3).